The chain runs to 107 residues: Thiosulfate sulfurtransferase GlpE (107 aa).

A Rhodanese domain is found at 19–107 (QDLNAVLVDI…WHKAGLPVEK (89 aa)). The active-site Cysteine persulfide intermediate is C67.

It belongs to the GlpE family.

The protein localises to the cytoplasm. It catalyses the reaction thiosulfate + hydrogen cyanide = thiocyanate + sulfite + 2 H(+). The catalysed reaction is thiosulfate + [thioredoxin]-dithiol = [thioredoxin]-disulfide + hydrogen sulfide + sulfite + 2 H(+). Its function is as follows. Transferase that catalyzes the transfer of sulfur from thiosulfate to thiophilic acceptors such as cyanide or dithiols. May function in a CysM-independent thiosulfate assimilation pathway by catalyzing the conversion of thiosulfate to sulfite, which can then be used for L-cysteine biosynthesis. The polypeptide is Thiosulfate sulfurtransferase GlpE (Aliivibrio fischeri (strain ATCC 700601 / ES114) (Vibrio fischeri)).